A 508-amino-acid chain; its full sequence is Photosystem II CP47 reaction center protein (508 aa).

A run of 6 helical transmembrane segments spans residues 21–36 (AVHLMHTALVSGWAGS), 101–115 (IVLSGLLFLAAIWHW), 140–156 (GIHLFLSGVLCFAFGAF), 203–218 (IAAGILGILAGLFHLS), 237–252 (VLSSSIAAVFFAAFVV), and 457–472 (TFALLFFFGHIWHGAR).

Belongs to the PsbB/PsbC family. PsbB subfamily. As to quaternary structure, PSII is composed of 1 copy each of membrane proteins PsbA, PsbB, PsbC, PsbD, PsbE, PsbF, PsbH, PsbI, PsbJ, PsbK, PsbL, PsbM, PsbT, PsbX, PsbY, PsbZ, Psb30/Ycf12, at least 3 peripheral proteins of the oxygen-evolving complex and a large number of cofactors. It forms dimeric complexes. Binds multiple chlorophylls. PSII binds additional chlorophylls, carotenoids and specific lipids. is required as a cofactor.

It is found in the plastid. It localises to the chloroplast thylakoid membrane. Functionally, one of the components of the core complex of photosystem II (PSII). It binds chlorophyll and helps catalyze the primary light-induced photochemical processes of PSII. PSII is a light-driven water:plastoquinone oxidoreductase, using light energy to abstract electrons from H(2)O, generating O(2) and a proton gradient subsequently used for ATP formation. The protein is Photosystem II CP47 reaction center protein of Marchantia polymorpha (Common liverwort).